Here is a 412-residue protein sequence, read N- to C-terminus: Zinc finger protein 260 (412 aa).

13 consecutive C2H2-type zinc fingers follow at residues 27 to 49 (YECN…KKMH), 55 to 77 (HECT…LRSH), 83 to 105 (YKCN…QKHH), 136 to 158 (YACK…EKIH), 164 to 186 (FECN…QNIH), 192 to 214 (FKCS…QRIH), 220 to 242 (YECK…QRSH), 248 to 270 (YTCK…EKIH), 276 to 298 (YKCN…HNIH), 304 to 326 (YECN…VRIH), 332 to 354 (YECK…MRSH), 360 to 382 (YGCN…MRIH), and 388 to 412 (YQCS…IHTH).

It belongs to the krueppel C2H2-type zinc-finger protein family. As to quaternary structure, binds DNA. Interacts with GATA4.

The protein localises to the nucleus. In terms of biological role, transcription factor that acts as a cardiac regulator and an effector of alpha1-adrenergic signaling. Binds to PE response elements (PERE) present in the promoter of genes such as ANF/NPPA and acts as a direct transcriptional activator of NPPA. Also acts as a cofactor with GATA4, a key cardiac regulator. The polypeptide is Zinc finger protein 260 (ZNF260) (Homo sapiens (Human)).